The primary structure comprises 344 residues: N-acetyl-gamma-glutamyl-phosphate reductase (344 aa).

Cys150 is a catalytic residue.

This sequence belongs to the NAGSA dehydrogenase family. Type 1 subfamily.

It is found in the cytoplasm. The catalysed reaction is N-acetyl-L-glutamate 5-semialdehyde + phosphate + NADP(+) = N-acetyl-L-glutamyl 5-phosphate + NADPH + H(+). Its pathway is amino-acid biosynthesis; L-arginine biosynthesis; N(2)-acetyl-L-ornithine from L-glutamate: step 3/4. Its function is as follows. Catalyzes the NADPH-dependent reduction of N-acetyl-5-glutamyl phosphate to yield N-acetyl-L-glutamate 5-semialdehyde. This is N-acetyl-gamma-glutamyl-phosphate reductase from Pseudomonas fluorescens (strain SBW25).